The sequence spans 650 residues: Growth hormone receptor (650 aa).

Positions 1-24 (MDLCQVFLTLALAVTSSTFSGSEA) are cleaved as a signal peptide. Over 25-273 (TPATLGKASP…ILEACEEDIQ (249 aa)) the chain is Extracellular. 2 cysteine pairs are disulfide-bonded: C56-C66 and C109-C120. N-linked (GlcNAc...) asparagine glycosylation occurs at N123. C134 and C148 are oxidised to a cystine. One can recognise a Fibronectin type-III domain in the interval 159-262 (PPIGLNWTLL…EVLRVIFPQT (104 aa)). N-linked (GlcNAc...) asparagine glycans are attached at residues N164, N169, and N208. Positions 248–252 (YSEFS) match the WSXWS motif motif. The chain crosses the membrane as a helical span at residues 274 to 297 (FPWFLIIIFGIFGVAVMLFVVIFS). Topologically, residues 298–650 (KQQRIKMLIL…STDQLNKIMQ (353 aa)) are cytoplasmic. The segment at 303-390 (KMLILPPVPV…HEKSAGILGA (88 aa)) is required for JAK2 binding. A Box 1 motif motif is present at residues 306–314 (ILPPVPVPK). The short motif at 349–358 (DSWVEFIELD) is the UbE motif element. S350 bears the Phosphoserine mark. A disordered region spans residues 466-486 (KPQPLLSSETEATHQLASTPM). Polar residues predominate over residues 470 to 486 (LLSSETEATHQLASTPM). Phosphotyrosine is present on residues Y498 and Y606.

This sequence belongs to the type I cytokine receptor family. Type 1 subfamily. On growth hormone (GH) binding, forms homodimers and binds JAK2 via a box 1-containing domain. Post-translationally, the soluble form (GHBP) is produced by phorbol ester-promoted proteolytic cleavage at the cell surface (shedding) by ADAM17/TACE. Shedding is inhibited by growth hormone (GH) binding to the receptor probably due to a conformational change in GHR rendering the receptor inaccessible to ADAM17. In terms of processing, on GH binding, phosphorylated on tyrosine residues in the cytoplasmic domain by JAK2. Ubiquitinated by the ECS(SOCS2) complex following ligand-binding and phosphorylation by JAK2, leading to its degradation by the proteasome. Regulation by the ECS(SOCS2) complex acts as a negative feedback loop of growth hormone receptor signaling. Ubiquitination is not sufficient for GHR internalization. As to expression, expressed in all tissues tested including, liver, heart, adipose tissue, mammary gland, testes, ovary, brain, kidney and muscle. Highest levels in liver.

It localises to the cell membrane. The protein resides in the secreted. Receptor for pituitary gland growth hormone (GH1) involved in regulating postnatal body growth. On ligand binding, couples to the JAK2/STAT5 pathway. Functionally, the soluble form (GHBP) acts as a reservoir of growth hormone in plasma and may be a modulator/inhibitor of GH signaling. In Mus musculus (Mouse), this protein is Growth hormone receptor (Ghr).